The following is a 1056-amino-acid chain: MIDLRLEEDILTATLPEFLTTRPKYRYAYTNTKQQDLRLLGPMRHVRLTHLYKHTKLWNLQYIERELTNIEIDDALDEFMQTFSLPYTIEQGTYKYNMLLGMHAHNIGYQDDVSELIANNPQLLNYLNDNPLASIFELIDIDLQIYQYGQNIFNNEVEHMILFLKDNTYHGVIQALQKHPFSATHVTWHLHKHIFVFHSREKLLNKLLATGLEDSQLYQRQKTYSTKRGDRPTERMITYIEDDHIRRIQAVLPLLLDNIFDVKLHRDSSMTWLKSYADTIYDSAKNSDSTVTPEIRKLYLRMYNQYMRVFLPIEQYMLYDTTCWPFSEKITLKINVRLISSRENQPVSWKTPIDTENLISIVQPDNPINKLNFTAVPSTMIRLNDNIMMYRSVKDMFAAIEYIPDSDENIPTIEMKEQALSRYISPDSEAQNFFNNQPPYLNSIINVNKQVFEAVRRGNIQVSTGSAEHLCLCMYVKSGLIVGRTVLIDDKVILRRNFNASTAKMITCYVKAVTQLYGEGSLIYPGLRIVFFGVETEPAMDVLKLFYGDKALYIQGFGDRGIGRDRFRTKIEDALTLRIGCDILISDIDQADYQDPSEEKFDDITEFVCYLTELVISNATIGLVKISMPTYYLLNKISQNINNKFSKVNINIVKLSTQKPYTYEAYLLLSHGSTLTTKGYAKNPVCDVYLEQISLQPQEIKIISTISNEINYDKPTLYRLVVDKNDITDVSIAMHILSIHCSTIITRSVMVKNDNTGAFVTMSGMKDMKRVAIMNRMTDGTNENAYMYEDNGKLYLQKVPYLEDLVNAFPNGFGSTHQNDYDSSTSVINVNALVRQVVYRVISKSIPVALLESLSRIRIVGGRDLGEMNAVYKLYKTPVEVYDTVGITREYPHVQISYRAQRYQFTESIPNHTLLLANYVIMNDIDRAPISSAEQINTIKKIISKIGVGSIAYVQVYTDVVARHINVMTKNDSFLISANADKTVFKVQVSGYKAVEMCNYEQLLQLVSDNTGVHIIKLTYQDVLESCVLSSGILGDTGSWLLDLVLASTYIIEIRG.

It belongs to the orthoreovirus lambda-2 protein family.

Its subcellular location is the virion. It carries out the reaction a 5'-end diphospho-ribonucleoside in mRNA + GTP + H(+) = a 5'-end (5'-triphosphoguanosine)-ribonucleoside in mRNA + diphosphate. The enzyme catalyses a 5'-end (5'-triphosphoguanosine)-ribonucleoside in mRNA + S-adenosyl-L-methionine = a 5'-end (N(7)-methyl 5'-triphosphoguanosine)-ribonucleoside in mRNA + S-adenosyl-L-homocysteine. Functionally, outer capsid protein involved in mRNA capping. Catalyzes the last 3 enzymatic activities for formation of the 5' cap structure on the viral plus-strand transcripts, namely the RNA guanylyltransferase, RNA-7N- and RNA-2'O-methyltransferase activities. In Aedes pseudoscutellaris reovirus (isolate France) (ApRV), this protein is Outer capsid protein VP5 (S5).